Reading from the N-terminus, the 305-residue chain is ATP synthase gamma chain (305 aa).

The protein belongs to the ATPase gamma chain family. In terms of assembly, F-type ATPases have 2 components, CF(1) - the catalytic core - and CF(0) - the membrane proton channel. CF(1) has five subunits: alpha(3), beta(3), gamma(1), delta(1), epsilon(1). CF(0) has three main subunits: a, b and c.

The protein resides in the cell membrane. Functionally, produces ATP from ADP in the presence of a proton gradient across the membrane. The gamma chain is believed to be important in regulating ATPase activity and the flow of protons through the CF(0) complex. This Streptomyces coelicolor (strain ATCC BAA-471 / A3(2) / M145) protein is ATP synthase gamma chain.